A 635-amino-acid chain; its full sequence is Frizzled and smoothened-like protein C (635 aa).

A signal peptide spans 1-20 (MKFKLIIFIIIIYIIKILKS). At 21–244 (EILNEFGYGL…NKWVQMYKMS (224 aa)) the chain is on the extracellular side. The FZ domain maps to 32–166 (DENLKCLSFI…LTKYGYTENN (135 aa)). 2 cysteine pairs are disulfide-bonded: Cys37–Cys108 and Cys50–Cys101. N-linked (GlcNAc...) asparagine glycans are attached at residues Asn65, Asn141, Asn156, Asn185, and Asn203. The helical transmembrane segment at 245–265 (IVLSTLSFICSIYNIITFGLL) threads the bilayer. The Cytoplasmic portion of the chain corresponds to 266-275 (SKLKSKYNLC). The chain crosses the membrane as a helical span at residues 276-296 (ITFFSVSTVLMSLMDIVTYGI). At 297 to 314 (GYEELLCPESGRYAIQSD) the chain is on the extracellular side. A helical membrane pass occupies residues 315–335 (VACGVTGAFFHIGITTGVLWW). The Cytoplasmic segment spans residues 336–356 (TTMSICLYSEVKRFKMISFRY). A helical transmembrane segment spans residues 357 to 377 (IIIFNSVISLILLIIPLSGQA). At 378-398 (FMSGNGSLGCWIRKTWYANGT) the chain is on the extracellular side. 2 N-linked (GlcNAc...) asparagine glycosylation sites follow: Asn382 and Asn396. A helical transmembrane segment spans residues 399–419 (FWIPCGISLFIGAICIVLVIY). Residues 420–440 (EIFKISRNLSKDNKPLMFQIR) lie on the Cytoplasmic side of the membrane. Residues 441–461 (PFLCVLLVGGSFLYLFIFYFN) form a helical membrane-spanning segment. Residues 462–496 (NERNLDKYKAAIPSYVQCLLSSDENGEDCLTDGPG) are Extracellular-facing. The helical transmembrane segment at 497 to 517 (FGAYFTFYFFTRLFGITSFSI) threads the bilayer. Topologically, residues 518–635 (YGTSKIARDI…SSKDSNTNSF (118 aa)) are cytoplasmic. Residues 559–594 (SISGSNQKRFNRNGSNFNMKQNKSNPNDSISLSVVE) show a composition bias toward polar residues. Residues 559 to 635 (SISGSNQKRF…SSKDSNTNSF (77 aa)) are disordered. Residues 594 to 623 (ESTKKQDTENELESNIETKENRSTDISIEN) adopt a coiled-coil conformation. Positions 623–635 (NTTSSKDSNTNSF) are enriched in low complexity.

It belongs to the G-protein coupled receptor Fz/Smo family.

Its subcellular location is the membrane. This Dictyostelium discoideum (Social amoeba) protein is Frizzled and smoothened-like protein C (fslC).